Reading from the N-terminus, the 859-residue chain is Auxin response factor 2 (859 aa).

A disordered region spans residues 1–48; that stretch reads MASSEVSMKGNRGGDNFSSSGFSDPKETRNVSVAGEGQKSNSTRSAAA. Over residues 14 to 23 the composition is skewed to low complexity; sequence GDNFSSSGFS. The TF-B3 DNA-binding region spans 164-266; the sequence is FCKTLTASDT…ELRVGVRRAM (103 aa). The segment covering 396–407 has biased composition (pro residues); that stretch reads LAPPALSPVPMP. 3 disordered regions span residues 396 to 442, 687 to 736, and 829 to 859; these read LAPP…LPAS, IASP…RSCT, and RSEE…AGNS. Polar residues-rich tracts occupy residues 416–426 and 695–704; these read IAPSSPDSSML and LSDQSKGSKS. The PB1 domain maps to 733 to 817; that stretch reads RSCTKVHKQG…RKIFIYTKEE (85 aa). Over residues 847–859 the composition is skewed to polar residues; it reads SASNPSLSSAGNS.

The protein belongs to the ARF family. In terms of assembly, homodimers and heterodimers. Interacts with ARF1. Expressed in the whole plant.

The protein localises to the nucleus. Its function is as follows. Auxin response factors (ARFs) are transcriptional factors that bind specifically to the DNA sequence 5'-TGTCTC-3' found in the auxin-responsive promoter elements (AuxREs). Could act as transcriptional activator or repressor. Formation of heterodimers with Aux/IAA proteins may alter their ability to modulate early auxin response genes expression. Promotes flowering, stamen development, floral organ abscission and fruit dehiscence. Functions independently of ethylene and cytokinin response pathways. May act as a repressor of cell division and organ growth. The polypeptide is Auxin response factor 2 (ARF2) (Arabidopsis thaliana (Mouse-ear cress)).